Reading from the N-terminus, the 303-residue chain is Elongation factor Ts (303 aa).

The segment at 82–85 (TDFV) is involved in Mg(2+) ion dislocation from EF-Tu.

This sequence belongs to the EF-Ts family.

The protein resides in the cytoplasm. Functionally, associates with the EF-Tu.GDP complex and induces the exchange of GDP to GTP. It remains bound to the aminoacyl-tRNA.EF-Tu.GTP complex up to the GTP hydrolysis stage on the ribosome. The polypeptide is Elongation factor Ts (Clostridioides difficile (strain 630) (Peptoclostridium difficile)).